We begin with the raw amino-acid sequence, 503 residues long: DEAD-box ATP-dependent RNA helicase CshA (503 aa).

A Q motif motif is present at residues 2–30 (QNFKELGISDKTVETLEAMGFKEPTPIQK). The 171-residue stretch at 33 to 203 (IPYTLEGKDI…QQFMKSPQIV (171 aa)) folds into the Helicase ATP-binding domain. ATP is bound at residue 46 to 53 (AQTGTGKT). The DEAD box signature appears at 150-153 (DEAD). The 162-residue stretch at 214 to 375 (QIDEYYTIVK…LRPPHRKEVL (162 aa)) folds into the Helicase C-terminal domain. The interval 436–503 (EKPLARKNRQ…KGRTFADLQK (68 aa)) is disordered. The segment covering 466 to 480 (KRSKGNFNKKKGKKT) has biased composition (basic residues). Basic and acidic residues predominate over residues 481–490 (DRRERQDKGR).

The protein belongs to the DEAD box helicase family. CshA subfamily. As to quaternary structure, oligomerizes, may be a member of the RNA degradosome.

It is found in the cytoplasm. The enzyme catalyses ATP + H2O = ADP + phosphate + H(+). Functionally, DEAD-box RNA helicase possibly involved in RNA degradation. Unwinds dsRNA in both 5'- and 3'-directions, has RNA-dependent ATPase activity. In Staphylococcus haemolyticus (strain JCSC1435), this protein is DEAD-box ATP-dependent RNA helicase CshA.